The chain runs to 608 residues: Isoprene synthase, chloroplastic (608 aa).

The transit peptide at 1 to 45 (MATNLLCLSNKLSSPTPTPSTRFPQSKNFITQKTSLANPKPWRVI) directs the protein to the chloroplast. D350 provides a ligand contact to dimethylallyl diphosphate. The Mg(2+) site is built by D350 and D354. A DDXXD motif motif is present at residues 350 to 354 (DDVYD). The dimethylallyl diphosphate site is built by E428, R494, and N497. The Mg(2+) site is built by N497, T501, and E505.

This sequence belongs to the terpene synthase family. Tpsb subfamily. Mg(2+) is required as a cofactor. It depends on Mn(2+) as a cofactor.

The protein localises to the plastid. The protein resides in the chloroplast. It carries out the reaction dimethylallyl diphosphate = isoprene + diphosphate. Functionally, lyase that catalyzes the formation of isoprene from dimethylallyl diphosphate. This chain is Isoprene synthase, chloroplastic (ISPS), found in Pueraria montana var. lobata (Kudzu vine).